We begin with the raw amino-acid sequence, 1252 residues long: ABC transporter B family member 19 (1252 aa).

Asparagine 5 carries N-linked (GlcNAc...) asparagine glycosylation. An ABC transmembrane type-1 1 domain is found at 41–330 (MFVGSLGAIV…SFSNLGAFSK (290 aa)). A run of 2 helical transmembrane segments spans residues 42–62 (FVGS…FLLF) and 88–108 (LYFV…IACW). Aspartate 136 serves as a coordination point for ATP. Helical transmembrane passes span 163 to 183 (VGNF…GFVS), 187 to 207 (LALL…LYAY), 274 to 294 (CTYG…GVFI), and 308 to 328 (IFSA…LGAF). Brassinolide-binding residues include tyrosine 276 and tryptophan 283. The ABC transporter 1 domain occupies 365 to 601 (IEFKDVTFSY…SGAYASLIRF (237 aa)). Tyrosine 374, serine 376, glycine 405, lysine 406, serine 407, threonine 408, and glutamate 529 together coordinate ATP. The N-linked (GlcNAc...) asparagine glycan is linked to asparagine 641. The 289-residue stretch at 687 to 975 (SIMGAVGSIL…TVSLAPEIIR (289 aa)) folds into the ABC transmembrane type-1 2 domain. 2 consecutive transmembrane segments (helical) span residues 688-708 (IMGA…AIVM) and 732-752 (FIYI…HYFF). A glycan (N-linked (GlcNAc...) asparagine) is linked at asparagine 758. Aspartate 780 is an ATP binding site. Asparagine 785 and asparagine 814 each carry an N-linked (GlcNAc...) asparagine glycan. A run of 3 helical transmembrane segments spans residues 822 to 842 (FIVA…TFPL), 914 to 934 (GFLF…ILWY), and 949 to 969 (VIKV…TVSL). The tract at residues 965 to 1252 (ETVSLAPEII…RLLQLQTHRI (288 aa)) is interaction with FKBP42/TWD1. The region spanning 1010 to 1246 (IEFRHVDFAY…PEGAYSRLLQ (237 aa)) is the ABC transporter 2 domain. ATP is bound by residues tyrosine 1019, serine 1021, arginine 1022, lysine 1051, serine 1052, and serine 1053.

The protein belongs to the ABC transporter superfamily. ABCB family. Multidrug resistance exporter (TC 3.A.1.201) subfamily. As to quaternary structure, interacts with 1-naphthylphthalamic acid (NPA), and FKBP42/TWD1. Post-translationally, phosphorylated by PHOT1 in phototropic seedlings, to modulates auxin export and distribution and regulates leaf and petiole curling. Ubiquitous, mostly in shoot meristems. Present in the majority of stem cells, predominantly in a non-polar manner. Accumulates in seedlings roots and hypocotyls, and in roots apices and inflorescences.

It is found in the cell membrane. The enzyme catalyses (indol-3-yl)acetate(in) + ATP + H2O = (indol-3-yl)acetate(out) + ADP + phosphate + H(+). It carries out the reaction brassinolide(in) + ATP + H2O = brassinolide(out) + ADP + phosphate + H(+). It catalyses the reaction 24-epi-brassinolide(in) + ATP + H2O = 24-epi-brassinolide(out) + ADP + phosphate + H(+). The catalysed reaction is 24-epi-castasterone(in) + ATP + H2O = 24-epi-castasterone(out) + ADP + phosphate + H(+). The enzyme catalyses castasterone(in) + ATP + H2O = castasterone(out) + ADP + phosphate + H(+). Its activity is regulated as follows. Transport capacity is stimulated by the chaperone protein FKBP42/TWD1. ATPase activity is specifically activated by bioactive brassinosteroids in a dose-dependent manner, including brassinolide (BL), 24-epiBL and 24-epicastasterone (24-epiCS). Inhibited by vanadate. Brassinosteroid exporter that, in conjunction with ABCB1, supports the accumulation of exogenous brassinosteroids (BR) in the apoplast, thus promoting BR signaling initiation involving the specific receptor BRI1 and required for plant growth and stress responses. Mediates the transport of castasterone (CSA) and brassinolide (BL) across the plasma membrane. Auxin efflux transporter that acts as a negative regulator of light signaling to promote hypocotyl elongation by mediating leaf tip to petiole auxin flux. Required for the regulation of leaf position and morphology during PHOT1-mediated blue light responses involving auxin distribution, especially in low light fluence. Together with ABCB1 and in a FKBP42/TWD1-dependent manner, supports seed development by promoting stamen elongation and, to a lesser extent, anther dehiscence and pollen maturation, probably as auxin transporters. Contributes to the connective auxin transport (CAT) that ensures communication across the shoot system, including auxin loading at axillary bud apices to influence strigolactone-mediated bud outgrowth responses and shoot branching control. Mediates the accumulation of chlorophyll and anthocyanin, as well as the expression of genes in response to light. Participates in auxin efflux and thus regulates the polar auxin basipetal transport (from auxin-producing leaves to auxin-sensitive tissues, and from root tips to root elongating zone). Involved in diverse auxin-mediated responses including gravitropism, phototropism and lateral root formation. Required for the regulation of organ bending, such as gravitropic root bending. In Arabidopsis thaliana (Mouse-ear cress), this protein is ABC transporter B family member 19.